The chain runs to 631 residues: RING finger protein 112 (631 aa).

An RING-type zinc finger spans residues 57 to 98 (CSICLERLREPISLDCGHDFCIRCFSTHRIPGCELPCCPECR). Residues 131–631 (AVRAERLLLV…GDREPLLQEE (501 aa)) form an interaction with ZBTB16 region. The GB1/RHD3-type G domain occupies 166–397 (DTPVCLLAVL…YISDVLSTAP (232 aa)). 317–318 (RD) lines the GTP pocket. The next 2 membrane-spanning stretches (helical) occupy residues 547–567 (LAAVGGAVGAGLMGLAGGVVG) and 580–600 (GMVAAGAAVGATGAAVVGGGV).

This sequence belongs to the TRAFAC class dynamin-like GTPase superfamily. GB1/RHD3 GTPase family. GB1 subfamily. Self-associates. Interacts with SP1 in an oxidative stress-regulated manner. Interacts with SIGMAR1 in an oxidative stress-regulated manner. Interacts with ZBTB16 (via C2H2-type zinc finger domains 1 and 2). In terms of processing, auto-ubiquitinated. As to expression, predominantly expressed in brain.

The protein resides in the membrane. The protein localises to the cytoplasm. It is found in the nucleus. It localises to the nuclear body. Its subcellular location is the nucleoplasm. The protein resides in the endosome. The protein localises to the cytoplasmic vesicle. It is found in the secretory vesicle. It localises to the synaptic vesicle. Its subcellular location is the postsynaptic density. The protein resides in the perikaryon. The protein localises to the cell projection. It is found in the neuron projection. The catalysed reaction is S-ubiquitinyl-[E2 ubiquitin-conjugating enzyme]-L-cysteine + [acceptor protein]-L-lysine = [E2 ubiquitin-conjugating enzyme]-L-cysteine + N(6)-ubiquitinyl-[acceptor protein]-L-lysine.. It participates in protein modification; protein ubiquitination. E3 ubiquitin-protein ligase that plays an important role in neuronal differentiation, including neurogenesis and gliogenesis, during brain development. During embryonic development initiates neuronal differentiation by inducing cell cycle arrest at the G0/G1 phase through up-regulation of cell-cycle regulatory proteins. Plays a role not only in the fetal period during the development of the nervous system, but also in the adult brain, where it is involved in the maintenance of neural functions and protection of the nervous tissue cells from oxidative stress-induced damage. Exhibits GTPase and E3 ubiquitin-protein ligase activities. Regulates dendritic spine density and synaptic neurotransmission; its ability to hydrolyze GTP is involved in the maintenance of dendritic spine density. This is RING finger protein 112 (Rnf112) from Rattus norvegicus (Rat).